Reading from the N-terminus, the 101-residue chain is Small ribosomal subunit protein uS14 (101 aa).

The protein belongs to the universal ribosomal protein uS14 family. Part of the 30S ribosomal subunit. Contacts proteins S3 and S10.

Its function is as follows. Binds 16S rRNA, required for the assembly of 30S particles and may also be responsible for determining the conformation of the 16S rRNA at the A site. The chain is Small ribosomal subunit protein uS14 from Shewanella amazonensis (strain ATCC BAA-1098 / SB2B).